Consider the following 176-residue polypeptide: Protein MAL2 (176 aa).

Topologically, residues 1–34 are cytoplasmic; the sequence is MSAGGASVPPPPNPAVSFPVPRVTLPAGPDILRT. Positions 31–175 constitute an MARVEL domain; sequence ILRTYSGAFV…SLGLALRRWR (145 aa). The chain crosses the membrane as a helical span at residues 35-55; sequence YSGAFVCLEILFGGLVWILVA. Topologically, residues 56–66 are lumenal; sequence SSNVPLPLLQG. The helical transmembrane segment at 67 to 87 threads the bilayer; it reads WVMFVSVTAFFFSLLFLGLFL. The Cytoplasmic portion of the chain corresponds to 88–102; that stretch reads SGMVTQIDANWNFLD. The chain crosses the membrane as a helical span at residues 103–123; the sequence is FAYHFTVFVFYFGAFLLEAAA. At 124–149 the chain is on the lumenal side; that stretch reads TSLHDLHYNITMTGQPLLNDNQYNIN. Residue Asn132 is glycosylated (N-linked (GlcNAc...) asparagine). Residues 150-170 traverse the membrane as a helical segment; the sequence is VAASIFAFMTTACYGCSLGLA. The Cytoplasmic portion of the chain corresponds to 171–176; sequence LRRWRP.

This sequence belongs to the MAL family. In terms of assembly, interacts with TPD52L2.

It is found in the cell membrane. Its subcellular location is the apical cell membrane. Its function is as follows. Member of the machinery of polarized transport. Required for the indirect transcytotic route at the step of the egress of the transcytosing cargo from perinuclear endosomes in order for it to travel to the apical surface via a raft-dependent pathway. The chain is Protein MAL2 (MAL2) from Pongo abelii (Sumatran orangutan).